A 759-amino-acid polypeptide reads, in one-letter code: Zinc finger protein 287 (759 aa).

Positions 42–124 constitute an SCAN box domain; sequence RRNFRNFPYP…ALVEDLTQIL (83 aa). The segment at 127-154 is disordered; it reads EEAPQSSALPQDTPEDDPNHDPNPASQA. In terms of domain architecture, KRAB spans 166-234; it reads VTFNDVAVDI…IKEIVEGPNP (69 aa). 14 C2H2-type zinc fingers span residues 366-388, 394-416, 422-444, 450-472, 478-500, 506-528, 534-556, 562-584, 590-612, 618-640, 646-668, 674-696, 702-724, and 730-752; these read YSCN…RENH, YECE…QRMH, YECH…QRIH, YKCE…QRTH, YKCL…QRVH, YICN…QKIH, YKCN…QRIH, YKCT…QTTH, YICN…HRTH, YKCS…QRIH, FKCN…QRVH, YKCH…RRTH, and YGCR…QRVH.

This sequence belongs to the krueppel C2H2-type zinc-finger protein family. In terms of tissue distribution, expressed in brain and at low levels in kidney and spleen and few hematopoietic cell lines.

Its subcellular location is the nucleus. Its function is as follows. May be involved in transcriptional regulation. The sequence is that of Zinc finger protein 287 from Mus musculus (Mouse).